The sequence spans 518 residues: ATP synthase F(1) complex catalytic subunit beta, mitochondrial (518 aa).

ADP contacts are provided by Gly-199, Val-200, Gly-201, Lys-202, Thr-203, and Val-204. Gly-199 lines the ATP pocket. Positions 199, 200, 201, 202, and 203 each coordinate phosphate. Gly-201, Lys-202, Thr-203, and Val-204 together coordinate ATP. Mg(2+) is bound at residue Thr-203. Position 228 (Glu-228) interacts with Mg(2+). Arg-229 contributes to the ATP binding site.

It belongs to the ATPase alpha/beta chains family. As to quaternary structure, homotrimer. Component of the ATP synthase complex composed at least of ATP5F1A/subunit alpha, ATP5F1B/subunit beta, ATP5MC1/subunit c (homooctomer), MT-ATP6/subunit a, MT-ATP8/subunit 8, ATP5ME/subunit e, ATP5MF/subunit f, ATP5MG/subunit g, ATP5MK/subunit k, ATP5MJ/subunit j, ATP5F1C/subunit gamma, ATP5F1D/subunit delta, ATP5F1E/subunit epsilon, ATP5PF/subunit F6, ATP5PB/subunit b, ATP5PD/subunit d, ATP5PO/subunit OSCP. ATP synthase complex consists of a soluble F(1) head domain (subunits alpha(3) and beta(3)) - the catalytic core - and a membrane F(0) domain - the membrane proton channel (subunits c, a, 8, e, f, g, k and j). These two domains are linked by a central stalk (subunits gamma, delta, and epsilon) rotating inside the F1 region and a stationary peripheral stalk (subunits F6, b, d, and OSCP).

The protein resides in the mitochondrion inner membrane. The enzyme catalyses ATP + H2O + 4 H(+)(in) = ADP + phosphate + 5 H(+)(out). In terms of biological role, catalytic subunit beta, of the mitochondrial membrane ATP synthase complex (F(1)F(0) ATP synthase or Complex V) that produces ATP from ADP in the presence of a proton gradient across the membrane which is generated by electron transport complexes of the respiratory chain. ATP synthase complex consist of a soluble F(1) head domain - the catalytic core - and a membrane F(1) domain - the membrane proton channel. These two domains are linked by a central stalk rotating inside the F(1) region and a stationary peripheral stalk. During catalysis, ATP synthesis in the catalytic domain of F(1) is coupled via a rotary mechanism of the central stalk subunits to proton translocation. In vivo, can only synthesize ATP although its ATP hydrolase activity can be activated artificially in vitro. With the subunit alpha (ATP5F1A), forms the catalytic core in the F(1) domain. The sequence is that of ATP synthase F(1) complex catalytic subunit beta, mitochondrial from Cyprinus carpio (Common carp).